Consider the following 279-residue polypeptide: 3-methyl-2-oxobutanoate hydroxymethyltransferase (279 aa).

Mg(2+)-binding residues include aspartate 44 and aspartate 83. Residues 44–45 (DS), aspartate 83, and lysine 112 each bind 3-methyl-2-oxobutanoate. Residue glutamate 114 coordinates Mg(2+). Residue glutamate 181 is the Proton acceptor of the active site.

It belongs to the PanB family. In terms of assembly, homodecamer; pentamer of dimers. It depends on Mg(2+) as a cofactor.

It is found in the cytoplasm. The catalysed reaction is 3-methyl-2-oxobutanoate + (6R)-5,10-methylene-5,6,7,8-tetrahydrofolate + H2O = 2-dehydropantoate + (6S)-5,6,7,8-tetrahydrofolate. It participates in cofactor biosynthesis; coenzyme A biosynthesis. Its function is as follows. Catalyzes the reversible reaction in which hydroxymethyl group from 5,10-methylenetetrahydrofolate is transferred onto alpha-ketoisovalerate to form ketopantoate. The protein is 3-methyl-2-oxobutanoate hydroxymethyltransferase of Nitrosopumilus maritimus (strain SCM1).